A 216-amino-acid polypeptide reads, in one-letter code: Probable GTP-binding protein EngB (216 aa).

The EngB-type G domain maps to 43 to 216; it reads DRLEVCFAGR…TLRSIITDLT (174 aa). Residues 51–58, 78–82, 96–99, 163–166, and 197–199 each bind GTP; these read GRSNVGKS, GRTQE, DLPG, TKAD, and TSS. The Mg(2+) site is built by S58 and T80.

The protein belongs to the TRAFAC class TrmE-Era-EngA-EngB-Septin-like GTPase superfamily. EngB GTPase family. Requires Mg(2+) as cofactor.

In terms of biological role, necessary for normal cell division and for the maintenance of normal septation. This Roseobacter denitrificans (strain ATCC 33942 / OCh 114) (Erythrobacter sp. (strain OCh 114)) protein is Probable GTP-binding protein EngB.